A 459-amino-acid chain; its full sequence is Ribulose bisphosphate carboxylase (459 aa).

Residue asparagine 111 participates in substrate binding. Lysine 166 functions as the Proton acceptor in the catalytic mechanism. Lysine 168 is a substrate binding site. Mg(2+) contacts are provided by lysine 191, aspartate 193, and glutamate 194. Lysine 191 bears the N6-carboxylysine mark. Histidine 287 acts as the Proton acceptor in catalysis. Arginine 288, histidine 321, and serine 368 together coordinate substrate.

It belongs to the RuBisCO large chain family. Type II subfamily. Homodimer. Mg(2+) serves as cofactor.

It catalyses the reaction 2 (2R)-3-phosphoglycerate + 2 H(+) = D-ribulose 1,5-bisphosphate + CO2 + H2O. The catalysed reaction is D-ribulose 1,5-bisphosphate + O2 = 2-phosphoglycolate + (2R)-3-phosphoglycerate + 2 H(+). In terms of biological role, ruBisCO catalyzes two reactions: the carboxylation of D-ribulose 1,5-bisphosphate, the primary event in carbon dioxide fixation, as well as the oxidative fragmentation of the pentose substrate. Both reactions occur simultaneously and in competition at the same active site. In Albidiferax ferrireducens (strain ATCC BAA-621 / DSM 15236 / T118) (Rhodoferax ferrireducens), this protein is Ribulose bisphosphate carboxylase.